The primary structure comprises 129 residues: Small ribosomal subunit protein uS11 (129 aa).

It belongs to the universal ribosomal protein uS11 family. As to quaternary structure, part of the 30S ribosomal subunit. Interacts with proteins S7 and S18. Binds to IF-3.

In terms of biological role, located on the platform of the 30S subunit, it bridges several disparate RNA helices of the 16S rRNA. Forms part of the Shine-Dalgarno cleft in the 70S ribosome. The protein is Small ribosomal subunit protein uS11 of Dechloromonas aromatica (strain RCB).